A 170-amino-acid polypeptide reads, in one-letter code: Ribosome maturation factor RimP (170 aa).

This sequence belongs to the RimP family.

Its subcellular location is the cytoplasm. Required for maturation of 30S ribosomal subunits. This chain is Ribosome maturation factor RimP, found in Acidothermus cellulolyticus (strain ATCC 43068 / DSM 8971 / 11B).